We begin with the raw amino-acid sequence, 360 residues long: MAAAAAAGAGPEMVRGQVFDVGPRYTNLSYIGEGAYGMVCSAYDNVNKVRVAIKKISPFEHQTYCQRTLREIKILLRFRHENIIGINDIIRAPTIEQMKDVYIVQDLMETDLYKLLKTQHLSNDHICYFLYQILRGLKYIHSANVLHRDLKPSNLLLNTTCDLKICDFGLARVADPDHDHTGFLTEYVATRWYRAPEIMLNSKGYTKSIDIWSVGCILAEMLSNRPIFPGKHYLDQLNHILGILGSPSQEDLNCIINLKARNYLLSLPHKNKVPWNRLFPNADSKALDLLDKMLTFNPHKRIEVEQALAHPYLEQYYDPSDEPVAEAPFKFDMELDDLPKEKLKELIFEETARFQPGYRS.

Position 2 is an N-acetylalanine (Ala-2). A Protein kinase domain is found at Tyr-25–Leu-313. Ser-29 bears the Phosphoserine; by SGK1 mark. Residues Ile-31–Val-39 and Lys-54 contribute to the ATP site. The active-site Proton acceptor is the Asp-149. Residue Thr-185 is modified to Phosphothreonine; by MAP2K1 and MAP2K2. A TXY motif is present at residues Thr-185–Tyr-187. Tyr-187 is modified (phosphotyrosine; by MAP2K1 and MAP2K2). Thr-190 bears the Phosphothreonine; by autocatalysis mark. Phosphoserine occurs at positions 246, 248, and 284.

This sequence belongs to the protein kinase superfamily. CMGC Ser/Thr protein kinase family. MAP kinase subfamily. In terms of assembly, binds both upstream activators and downstream substrates in multimolecular complexes. Interacts with ADAM15, ARHGEF2, ARRB2, DAPK1 (via death domain), HSF4, IER3, IPO7, MKNK2, MORG1, NISCH, PEA15, SGK1, and isoform 1 of NEK2. Interacts (via phosphorylated form) with TPR (via C-terminal region and phosphorylated form); the interaction requires dimerization of MAPK1/ERK2 and increases following EGF stimulation. Interacts with MAP2K1. Interacts with DUSP6. Interacts (phosphorylated form) with CAV2 ('Tyr-19'-phosphorylated form); the interaction, promoted by insulin, leads to nuclear location and MAPK1 activation. MKNK2 isoform 1 binding prevents from dephosphorylation and inactivation. Interacts with DCC. The phosphorylated form interacts with PML. Interacts with STYX. Interacts with CDK2AP2. Interacts with CAVIN4. Interacts with DUSP7; the interaction enhances DUSP7 phosphatase activity. Interacts with GIT1; this interaction is necessary for MAPK1 localization to focal adhesions. Interacts with ZNF263. Interacts with phosphoglycerate kinase PGK1; the interaction is direct, occurs under hypoxic conditions, and promotes interaction between PGK1 and PIN1. Requires Mg(2+) as cofactor. Dually phosphorylated on Thr-185 and Tyr-187, which activates the enzyme. Phosphorylated upon FLT3 and KIT signaling. Phosphorylation on Ser-29 by SGK1 results in its activation by enhancing its interaction with MAP2K1/MEK1 and MAP2K2/MEK2. Phosphorylation at Ser-246 and Ser-248 as well as autophosphorylation at Thr-190 promote nuclear localization. Ligand-activated ALK induces tyrosine phosphorylation. Dephosphorylated by PTPRJ at Tyr-187. Dephosphorylated by DUSP1 and DUSP2 at Thr-185 and Tyr-187. Post-translationally, ISGylated. In terms of processing, ubiquitinated by TRIM15 via 'Lys-63'-linked ubiquitination; leading to activation. Deubiquitinated by CYLD.

The protein localises to the nucleus. It localises to the cytoplasm. The protein resides in the cytoskeleton. It is found in the microtubule organizing center. Its subcellular location is the centrosome. The protein localises to the spindle. It localises to the membrane. The protein resides in the caveola. It is found in the cell junction. Its subcellular location is the focal adhesion. It catalyses the reaction L-seryl-[protein] + ATP = O-phospho-L-seryl-[protein] + ADP + H(+). It carries out the reaction L-threonyl-[protein] + ATP = O-phospho-L-threonyl-[protein] + ADP + H(+). With respect to regulation, phosphorylated by MAP2K1/MEK1 and MAP2K2/MEK2 on Thr-185 and Tyr-187 in response to external stimuli like insulin or NGF. Both phosphorylations are required for activity. This phosphorylation causes dramatic conformational changes, which enable full activation and interaction of MAPK1/ERK2 with its substrates. Phosphorylation on Ser-29 by SGK1 results in its activation by enhancing its interaction with MAP2K1/MEK1 and MAP2K2/MEK2. Dephosphorylated and inactivated by DUSP1, DUSP3, DUSP6 and DUSP9. Inactivated by pyrimidylpyrrole inhibitors. Functionally, serine/threonine kinase which acts as an essential component of the MAP kinase signal transduction pathway. MAPK1/ERK2 and MAPK3/ERK1 are the 2 MAPKs which play an important role in the MAPK/ERK cascade. They participate also in a signaling cascade initiated by activated KIT and KITLG/SCF. Depending on the cellular context, the MAPK/ERK cascade mediates diverse biological functions such as cell growth, adhesion, survival and differentiation through the regulation of transcription, translation, cytoskeletal rearrangements. The MAPK/ERK cascade also plays a role in initiation and regulation of meiosis, mitosis, and postmitotic functions in differentiated cells by phosphorylating a number of transcription factors. About 160 substrates have already been discovered for ERKs. Many of these substrates are localized in the nucleus, and seem to participate in the regulation of transcription upon stimulation. However, other substrates are found in the cytosol as well as in other cellular organelles, and those are responsible for processes such as translation, mitosis and apoptosis. Moreover, the MAPK/ERK cascade is also involved in the regulation of the endosomal dynamics, including lysosome processing and endosome cycling through the perinuclear recycling compartment (PNRC); as well as in the fragmentation of the Golgi apparatus during mitosis. The substrates include transcription factors (such as ATF2, BCL6, ELK1, ERF, FOS, HSF4 or SPZ1), cytoskeletal elements (such as CANX, CTTN, GJA1, MAP2, MAPT, PXN, SORBS3 or STMN1), regulators of apoptosis (such as BAD, BTG2, CASP9, DAPK1, IER3, MCL1 or PPARG), regulators of translation (such as EIF4EBP1 and FXR1) and a variety of other signaling-related molecules (like ARHGEF2, DCC, FRS2 or GRB10). Protein kinases (such as RAF1, RPS6KA1/RSK1, RPS6KA3/RSK2, RPS6KA2/RSK3, RPS6KA6/RSK4, SYK, MKNK1/MNK1, MKNK2/MNK2, RPS6KA5/MSK1, RPS6KA4/MSK2, MAPKAPK3 or MAPKAPK5) and phosphatases (such as DUSP1, DUSP4, DUSP6 or DUSP16) are other substrates which enable the propagation the MAPK/ERK signal to additional cytosolic and nuclear targets, thereby extending the specificity of the cascade. Mediates phosphorylation of TPR in response to EGF stimulation. May play a role in the spindle assembly checkpoint. Phosphorylates PML and promotes its interaction with PIN1, leading to PML degradation. Phosphorylates CDK2AP2. Phosphorylates phosphoglycerate kinase PGK1 under hypoxic conditions to promote its targeting to the mitochondrion and suppress the formation of acetyl-coenzyme A from pyruvate. Its function is as follows. Acts as a transcriptional repressor. Binds to a [GC]AAA[GC] consensus sequence. Repress the expression of interferon gamma-induced genes. Seems to bind to the promoter of CCL5, DMP1, IFIH1, IFITM1, IRF7, IRF9, LAMP3, OAS1, OAS2, OAS3 and STAT1. Transcriptional activity is independent of kinase activity. The polypeptide is Mitogen-activated protein kinase 1 (Bos taurus (Bovine)).